Reading from the N-terminus, the 38-residue chain is Potassium channel toxin alpha-KTx 6.4 (38 aa).

Intrachain disulfides connect C6/C27, C12/C32, C16/C34, and C22/C37.

The protein belongs to the short scorpion toxin superfamily. Potassium channel inhibitor family. Alpha-KTx 06 subfamily. In terms of tissue distribution, expressed by the venom gland.

The protein localises to the secreted. Potently, completely and reversibly blocks voltage-gated potassium channel Kv1.2/KCNA2 and Shaker B (Sh). Also blocks small conductance (SK) calcium-activated potassium channel (KCNN). The chain is Potassium channel toxin alpha-KTx 6.4 from Pandinus imperator (Emperor scorpion).